Consider the following 310-residue polypeptide: MNRKYIPFGLALLFCLTPFVSSPIALVIGFLLASFGLVPTELPIASFTKKLLSYSIIGLGFGINFEQALSVTSDGIGLIIATIVGTLVIGSLIAKVIKLETTTAYLISSGTAICGGSAIAAVAPAIRAKDEQIGLALATVFVLNSLALFIFPVIGHALNLDQHTFGTWAAIAIHDTSSVVGAASAYGEEALTTATTLKLARALWIIPVALISAVIFSRGNKENGSKKLVIPYFIFWYCAAIAFSDFFPQLEVVYHGIFTIAKQALVVCLFLIGCSISISKLKSSGPKPLLFGVTLWVLISTTSLSWLVLR.

The next 10 membrane-spanning stretches (helical) occupy residues Pro7–Gly29, Ile44–Ile63, Gly75–Ala94, Ala104–Ile126, Ile133–Gly155, Phe165–Gly187, Leu199–Arg218, Leu228–Leu250, Ile257–Ser279, and Leu289–Val308.

Belongs to the UPF0324 family.

It is found in the cell membrane. The protein is UPF0324 membrane protein VP0936 of Vibrio parahaemolyticus serotype O3:K6 (strain RIMD 2210633).